The following is a 237-amino-acid chain: 2,3,4,5-tetrahydropyridine-2,6-dicarboxylate N-acetyltransferase (237 aa).

It belongs to the transferase hexapeptide repeat family. DapH subfamily.

The enzyme catalyses (S)-2,3,4,5-tetrahydrodipicolinate + acetyl-CoA + H2O = L-2-acetamido-6-oxoheptanedioate + CoA. It participates in amino-acid biosynthesis; L-lysine biosynthesis via DAP pathway; LL-2,6-diaminopimelate from (S)-tetrahydrodipicolinate (acetylase route): step 1/3. Its function is as follows. Catalyzes the transfer of an acetyl group from acetyl-CoA to tetrahydrodipicolinate. The protein is 2,3,4,5-tetrahydropyridine-2,6-dicarboxylate N-acetyltransferase of Alkaliphilus metalliredigens (strain QYMF).